Reading from the N-terminus, the 440-residue chain is MVRISEDLIRRRAEHNNGEIFSLEELSLHQQDIQRIEHIHKWCRDLKILYLQNNLIPKIENVGRLKKLEYLNLALNNIEVIENLEGCESLQKLDLTVNFVGRLSSVETLKHNLHLKELYLVGNPCAEYQGYRQYVVATVPQLQSLDGKEISRAERIQALQELDAVRTRVLQQETKYLEEREKQKSNANEHPEINQSLSESQNGTQQYPESSSKTHTEAEDEEREFWEKPCPFTPESRLEAHRHLEEKRRANEKEKEKPKTKTPRTLITPDGRVLNVNEPKLDFSLFEDENNCLLLDLHVYRHMDSSLLDVDVQPMYVRVTVKGKVFQLVLPAEVKPDSSSAQRSQTTGHLLLILPLANEDVKPKKRTIRPTSVTSNQNNKKDTRAAPRRELLEVDPGLAGSLANIVPKGQESSHNPQRCGLEERPVSKDFVDDPEVPPLM.

4 LRR repeats span residues 20–43 (IFSL…HKWC), 44–65 (RDLK…VGRL), 66–89 (KKLE…GCES), and 90–110 (LQKL…ETLK). The LRRCT domain maps to 128-146 (YQGYRQYVVATVPQLQSLD). Basic and acidic residues predominate over residues 178–192 (EEREKQKSNANEHPE). Disordered stretches follow at residues 178–267 (EERE…RTLI) and 363–440 (PKKR…PPLM). Positions 193–211 (INQSLSESQNGTQQYPESS) are enriched in polar residues. Over residues 236–259 (SRLEAHRHLEEKRRANEKEKEKPK) the composition is skewed to basic and acidic residues. Positions 276–374 (VNEPKLDFSL…KRTIRPTSVT (99 aa)) constitute a CS domain. The span at 369–378 (RPTSVTSNQN) shows a compositional bias: polar residues. 2 stretches are compositionally biased toward basic and acidic residues: residues 379 to 392 (NKKD…RELL) and 420 to 431 (GLEERPVSKDFV).

It belongs to the tilB family. As to quaternary structure, interacts with dvl2. Interacts with kur. As to expression, expressed in kinocilia of hair cells.

It is found in the cytoplasm. It localises to the dynein axonemal particle. The protein localises to the cell projection. Its subcellular location is the cilium. In terms of biological role, plays a crucial role in regulating cilia motility in pronephric tubules, cloaca and neural tube. Required for establishing left-right asymmetry of the body plan; controls cell fate and convergent extension (CE) movements during gastrulation, respectively, via the Wnt and the planar cell polarity (PCP) signaling pathways. Required for the proper development of renal glomeruli and tubules. The chain is Dynein axonemal assembly factor 11 (dnaaf11) from Danio rerio (Zebrafish).